We begin with the raw amino-acid sequence, 241 residues long: Uridylate kinase (241 aa).

An ATP-binding site is contributed by 9–10; that stretch reads GS. Position 44 (Gly-44) interacts with UMP. ATP contacts are provided by Gly-45 and Arg-49. Residues Asp-66 and 114–120 each bind UMP; that span reads VTPGQTT. ATP-binding residues include Thr-140, Tyr-146, and Asp-149. The interval 222–241 is disordered; it reads TDVIPTGSEEPIYWTGSSDA.

It belongs to the UMP kinase family. As to quaternary structure, homohexamer.

Its subcellular location is the cytoplasm. The enzyme catalyses UMP + ATP = UDP + ADP. The protein operates within pyrimidine metabolism; CTP biosynthesis via de novo pathway; UDP from UMP (UMPK route): step 1/1. Its activity is regulated as follows. Inhibited by UTP. Functionally, catalyzes the reversible phosphorylation of UMP to UDP. The sequence is that of Uridylate kinase from Halorubrum lacusprofundi (strain ATCC 49239 / DSM 5036 / JCM 8891 / ACAM 34).